Here is a 340-residue protein sequence, read N- to C-terminus: Ferrochelatase (340 aa).

Residues His-189 and Glu-292 each contribute to the Fe cation site.

It belongs to the ferrochelatase family.

The protein resides in the cytoplasm. The enzyme catalyses heme b + 2 H(+) = protoporphyrin IX + Fe(2+). The protein operates within porphyrin-containing compound metabolism; protoheme biosynthesis; protoheme from protoporphyrin-IX: step 1/1. In terms of biological role, catalyzes the ferrous insertion into protoporphyrin IX. In Pseudomonas syringae pv. syringae (strain B728a), this protein is Ferrochelatase.